The chain runs to 387 residues: 3-ketoacyl-CoA thiolase (387 aa).

Catalysis depends on C91, which acts as the Acyl-thioester intermediate. Residues H343 and C373 each act as proton acceptor in the active site.

Belongs to the thiolase-like superfamily. Thiolase family. Heterotetramer of two alpha chains (FadB) and two beta chains (FadA).

It localises to the cytoplasm. The catalysed reaction is an acyl-CoA + acetyl-CoA = a 3-oxoacyl-CoA + CoA. Its pathway is lipid metabolism; fatty acid beta-oxidation. In terms of biological role, catalyzes the final step of fatty acid oxidation in which acetyl-CoA is released and the CoA ester of a fatty acid two carbons shorter is formed. This Photobacterium profundum (strain SS9) protein is 3-ketoacyl-CoA thiolase.